Here is a 469-residue protein sequence, read N- to C-terminus: MSLPIAGLAQLSKGIIQVVGKDATKFLNGLITSRMLPNVVKKKQHTISENENRHANLSEIIDINNNWGLMHGDIYDPEENIFIGRDGLNSMFLNSKGRVTADCFLYSFPFHNSKGSFEEVLKKPNFLIEVDSRIIPEMESLLRIHKLSAKVKINTVSDIYSYYYYSDTMEFDELLEQVQDTYFRSVDPNEALVKANEFIESNLIFNSRVSSNIVGFSIDNRIPNLGIKILTNKPLNNDDQNIGVAVDDFFSESFQQSFRTNIISEDVINMRRNVNGLFEGQDADIDQTLLPFECNLDYTNGLSLDKGCYVGQELTIRTYNNGVIRKRIMPVQFFENNEETVDEISNQGYVNIDSSDKVVETLKMLNQTTLGKLDMLPLYDLPVENEESKSASPFASSPFGGESKKSRRRKASSGKIISQHDNVGFALVTLSEIERNDLFKIEVPSLEGGMRSVGIKVFTPDWWPEQEDY.

The transit peptide at 1-43 (MSLPIAGLAQLSKGIIQVVGKDATKFLNGLITSRMLPNVVKKK) directs the protein to the mitochondrion. The disordered stretch occupies residues 387–415 (ESKSASPFASSPFGGESKKSRRRKASSGK). Residues 390-401 (SASPFASSPFGG) show a composition bias toward low complexity.

It belongs to the GcvT family. CAF17/IBA57 subfamily.

It is found in the mitochondrion matrix. In Scheffersomyces stipitis (strain ATCC 58785 / CBS 6054 / NBRC 10063 / NRRL Y-11545) (Yeast), this protein is Iron-sulfur cluster assembly factor IBA57 homolog, mitochondrial (CAF17).